Here is a 454-residue protein sequence, read N- to C-terminus: Zinc finger protein 474 (454 aa).

A disordered region spans residues 48–85 (RGEKIKTNPRKNRPGTVILSKQSSRRIMSGSQPRPPVI). Positions 66–79 (LSKQSSRRIMSGSQ) are enriched in polar residues. A C2HC/C3H-type 1 zinc finger spans residues 91–120 (GFRVCYICGREFGSQSLGIHEPQCLEKWRV). Zn(2+) is bound by residues Cys95, Cys98, His110, and Cys114. The disordered stretch occupies residues 125–146 (LPKHLRRPEPSKPPPFSGSGSY). C2HC/C3H-type zinc fingers lie at residues 162-191 (QLLP…KVEG), 218-247 (RTVI…KWKV), 281-310 (QLVS…QPSG), 352-381 (PTIV…KWHN), and 425-454 (QLVP…KVAK). Zn(2+)-binding residues include Cys166, Cys169, His181, Cys185, Cys222, Cys225, His237, and Cys241. Residues 256-282 (FRQPLPQKPQPLLTGQPKHAGPRQGQL) are disordered. Residues Cys285, Cys288, His300, Cys304, Cys356, Cys359, His371, Cys375, Cys429, Cys432, His444, and Cys448 each coordinate Zn(2+). A disordered region spans residues 299–345 (VHQRSCKAQPSGPKVQDLTLGSRGGLKESTNPKPQRNMAAPPVTDKP).

Zn(2+) serves as cofactor.

This is Zinc finger protein 474 (ZNF474) from Bos taurus (Bovine).